The primary structure comprises 1283 residues: Rab11 family-interacting protein 1 (1283 aa).

Residues 1–126 form the C2 domain; sequence MSLMVSAGRG…DQGRRKTQWY (126 aa). A compositionally biased stretch (basic and acidic residues) spans 161–185; the sequence is SMKDKSRNPFGKLKDKIKGKNKDSG. A disordered region spans residues 161–281; that stretch reads SMKDKSRNPF…VMSHKRTAST (121 aa). Phosphoserine is present on residues Ser-184, Ser-202, Ser-206, and Ser-234. Over residues 225 to 239 the composition is skewed to polar residues; it reads NLQKTPLSQSMSVLP. Acidic residues predominate over residues 257–266; the sequence is WDEDDNEDES. Residues Ser-300, Ser-315, Ser-339, Ser-341, Ser-343, Ser-345, Ser-356, Ser-357, and Ser-382 each carry the phosphoserine modification. 5 disordered regions span residues 330-727, 741-782, 835-913, 969-993, and 1037-1141; these read EAKG…QEVP, VGEL…ASVP, PQEL…LFRM, DERIDQVEDDGDQVEDDGETAKSST, and ASVT…RVEN. Basic and acidic residues predominate over residues 419–433; the sequence is ATKEAKESKKPESRR. A Phosphoserine modification is found at Ser-435. Positions 442–451 are enriched in basic and acidic residues; sequence GKKDVAKGSE. Phosphoserine is present on Ser-477. Residues 482–491 are compositionally biased toward basic and acidic residues; the sequence is DLVRRSEKDT. Ser-529 and Ser-545 each carry phosphoserine. Low complexity predominate over residues 588 to 612; sequence SSESPSVFSSLSSPIAAPISTSTPI. A compositionally biased stretch (polar residues) spans 637 to 652; that stretch reads QTESLTPVPNSGSSAL. Basic and acidic residues predominate over residues 698 to 715; it reads ETGRQEEELPRFPCKKQD. Ser-758 carries the phosphoserine modification. Over residues 855 to 866 the composition is skewed to basic and acidic residues; it reads ESPHAEDSERES. Over residues 975 to 986 the composition is skewed to acidic residues; that stretch reads VEDDGDQVEDDG. Residues 1037–1048 are compositionally biased toward polar residues; the sequence is ASVTAPSEQTTE. The segment covering 1116–1131 has biased composition (basic and acidic residues); sequence SDTHHTSTAESQKKAT. Ser-1135 is subject to Phosphoserine. Residues 1211 to 1273 enclose the FIP-RBD domain; sequence KKYSPSDPAF…EETPNILRIP (63 aa). The tract at residues 1219–1283 is necessary for interaction with RAB4A and RAB11A, subcellular location and endosomal recycling; it reads AFAYAQLTHD…TQVGKKAGKM (65 aa).

Interacts with RAB11A (GTP-bound form); the interaction induces RAB11FIP1 recruitment to membranes. Interacts with RAB14 (GTP-bound form). As to quaternary structure, homooligomer. Isoform 2 interacts with RAB4A, RAB11A, RAB11B and RAB25. According to PubMed:15280022, RAB4A binding to RAB11FIP1 is of very low affinity in vitro and in vivo. Isoform 2 is expressed in brain, heart, testis, lung, spleen, ovary and small intestine.

It is found in the recycling endosome. The protein localises to the cytoplasmic vesicle. It localises to the phagosome membrane. A Rab11 effector protein involved in the endosomal recycling process. Also involved in controlling membrane trafficking along the phagocytic pathway and in phagocytosis. Interaction with RAB14 may function in the process of neurite formation. In Homo sapiens (Human), this protein is Rab11 family-interacting protein 1.